We begin with the raw amino-acid sequence, 124 residues long: Small ribosomal subunit protein uS12 (124 aa).

Residues 1–29 (MATINQLVRKGRKRRVAKSNVPALEASPQ) form a disordered region. Asp-89 carries the post-translational modification 3-methylthioaspartic acid. The interval 101–124 (AADTAGVDKRRQGRSKYGAKRPKS) is disordered. Residues 111–124 (RQGRSKYGAKRPKS) show a composition bias toward basic residues.

The protein belongs to the universal ribosomal protein uS12 family. In terms of assembly, part of the 30S ribosomal subunit. Contacts proteins S8 and S17. May interact with IF1 in the 30S initiation complex.

Its function is as follows. With S4 and S5 plays an important role in translational accuracy. Interacts with and stabilizes bases of the 16S rRNA that are involved in tRNA selection in the A site and with the mRNA backbone. Located at the interface of the 30S and 50S subunits, it traverses the body of the 30S subunit contacting proteins on the other side and probably holding the rRNA structure together. The combined cluster of proteins S8, S12 and S17 appears to hold together the shoulder and platform of the 30S subunit. In Alkalilimnicola ehrlichii (strain ATCC BAA-1101 / DSM 17681 / MLHE-1), this protein is Small ribosomal subunit protein uS12.